A 65-amino-acid chain; its full sequence is UPF0434 protein PSHAa1659 (65 aa).

This sequence belongs to the UPF0434 family.

The polypeptide is UPF0434 protein PSHAa1659 (Pseudoalteromonas translucida (strain TAC 125)).